A 148-amino-acid chain; its full sequence is Gastrin-releasing peptide (148 aa).

An N-terminal signal peptide occupies residues 1–23 (MRGRELPLVLLALVLCLAPRGRA). M50 bears the Methionine amide mark. The propeptide occupies 54 to 148 (STGESSSVSE…EGRNPQLNQQ (95 aa)). The interval 89 to 148 (EAKENRNHQPPQPKALGNQQPSWDSEDSSNFKDVGSKGKVGRLSAPGSQREGRNPQLNQQ) is disordered.

Belongs to the bombesin/neuromedin-B/ranatensin family.

It is found in the secreted. Its subcellular location is the cytoplasmic vesicle. The protein localises to the secretory vesicle lumen. It localises to the cell projection. The protein resides in the neuron projection. Stimulates the release of gastrin and other gastrointestinal hormones. Contributes to the perception of prurient stimuli and to the transmission of itch signals in the spinal cord that promote scratching behavior. Contributes primarily to nonhistaminergic itch sensation. In one study, shown to act in the amygdala as part of an inhibitory network which inhibits memory specifically related to learned fear. In another study, shown to act on vasoactive intestinal peptide (VIP)-expressing cells in the auditory cortex, most likely via extrasynaptic diffusion from local and long-range sources, to mediate disinhibition of glutamatergic cells via VIP cell-specific GRPR signaling which leads to enhanced auditory fear memories. Contributes to the regulation of food intake. Inhibits voltage-gated sodium channels but enhances voltage-gated potassium channels in hippocampal neurons. Induces sighing by acting directly on the pre-Botzinger complex, a cluster of several thousand neurons in the ventrolateral medulla responsible for inspiration during respiratory activity. Functionally, induces an itch response through activation of receptors present on mast cells, triggering mast cell degranulation. This chain is Gastrin-releasing peptide (GRP), found in Homo sapiens (Human).